Consider the following 131-residue polypeptide: Histone H2A.2 (131 aa).

The tract at residues 1–22 (MSGGKGKAGSSEKASTSRSAKA) is disordered. Serine 2 is modified (N-acetylserine). An N6-acetyllysine mark is found at lysine 5 and lysine 7. Residue glutamine 105 is modified to N5-methylglutamine. A Glycyl lysine isopeptide (Lys-Gly) (interchain with G-Cter in SUMO) cross-link involves residue lysine 126. Serine 128 carries the post-translational modification Phosphoserine. Residues 128–129 (SQ) carry the [ST]-Q motif motif.

This sequence belongs to the histone H2A family. As to quaternary structure, the nucleosome is a histone octamer containing two molecules each of H2A, H2B, H3 and H4 assembled in one H3-H4 heterotetramer and two H2A-H2B heterodimers. The octamer wraps approximately 147 bp of DNA. Post-translationally, phosphorylated to form H2AS128ph (gamma-H2A) in response to DNA double-strand breaks (DSBs) generated by exogenous genotoxic agents and by stalled replication forks. Phosphorylation is dependent on the DNA damage checkpoint kinases MEC1/ATR and TEL1/ATM, spreads on either side of a detected DSB site and may mark the surrounding chromatin for recruitment of proteins required for DNA damage signaling and repair. Gamma-H2A is removed from the DNA prior to the strand invasion-primer extension step of the repair process and subsequently dephosphorylated. Dephosphorylation is necessary for efficient recovery from the DNA damage checkpoint. Acetylated by ESA1 to form H2AK4ac and H2AK7ac.

It is found in the nucleus. The protein localises to the chromosome. Its function is as follows. Core component of nucleosome which plays a central role in DNA double strand break (DSB) repair. Nucleosomes wrap and compact DNA into chromatin, limiting DNA accessibility to the cellular machineries which require DNA as a template. Histones thereby play a central role in transcription regulation, DNA repair, DNA replication and chromosomal stability. DNA accessibility is regulated via a complex set of post-translational modifications of histones, also called histone code, and nucleosome remodeling. This Scheffersomyces stipitis (strain ATCC 58785 / CBS 6054 / NBRC 10063 / NRRL Y-11545) (Yeast) protein is Histone H2A.2 (HTA2).